The primary structure comprises 430 residues: Alpha-humulene synthase asR6 (430 aa).

The protein belongs to the terpene synthase family. Alpha-humulene synthase eupE subfamily. The cofactor is Mg(2+).

It catalyses the reaction (2E,6E)-farnesyl diphosphate = alpha-humulene + diphosphate. It functions in the pathway secondary metabolite biosynthesis; terpenoid biosynthesis. Its function is as follows. Alpha-humulene synthase; part of the gene cluster that mediates the biosynthesis of xenovulene A, an unusual meroterpenoid that has potent inhibitory effects on the human gamma-aminobutyrate A (GABAA) benzodiazepine receptor. The first step of xenovulene A biosynthesis is the biosynthesis of 3-methylorcinaldehyde performed by the non-reducing polyketide synthase aspks1. The salicylate hydroxylase asL1 then catalyzes the oxidative dearomatization of 3-methylorcinaldehyde to yield a dearomatized hydroxycyclohexadione. The 2-oxoglutarate-dependent dioxygenase asL3 further catalyzes the oxidative ring expansion to provide the first tropolone metabolite. The cytochrome P450 monooxygenase asR2 allows the synthesis of tropolone hemiacetal. In parallel, a previously unrecognised class of terpene cyclase, asR6, produces alpha-humulene from farnesylpyrophosphate (FPP). The putative Diels-Alderase asR5 probably catalyzes the formation of the tropolone-humulene skeleton by linking humulene and the polyketide moiety. Oxidative-ring contractions catalyzed by asL4 and asL6 then processively remove carbon atoms from the polyketide to yield xenovulene A. In Sarocladium schorii (Acremonium strictum (strain IMI 501407)), this protein is Alpha-humulene synthase asR6.